A 244-amino-acid chain; its full sequence is 5-oxoprolinase subunit A (244 aa).

Belongs to the LamB/PxpA family. In terms of assembly, forms a complex composed of PxpA, PxpB and PxpC.

The catalysed reaction is 5-oxo-L-proline + ATP + 2 H2O = L-glutamate + ADP + phosphate + H(+). Catalyzes the cleavage of 5-oxoproline to form L-glutamate coupled to the hydrolysis of ATP to ADP and inorganic phosphate. This chain is 5-oxoprolinase subunit A, found in Salmonella paratyphi A (strain ATCC 9150 / SARB42).